The chain runs to 487 residues: E3 ubiquitin-protein ligase RNF8 (487 aa).

The FHA domain occupies 38–92; it reads VTVGRGFGVTYQLVSKICPLMISRNHCILKQNAEGQWTIKDNKSLNGVWLNRERL. Residues 68-72 are required for interaction with PIWIL1; that stretch reads QNAEG. Disordered stretches follow at residues 143–176 and 182–201; these read MMEKNKGLRTKRKFSLDELEGSGAEGPSNLKSKI and EPGQQVKSHGKGKVASQPSE. At Ser-157 the chain carries Phosphoserine. The RING-type zinc finger occupies 405–443; it reads CIICSEYFVEAVTLNCAHSFCSYCINEWMKRKVECPICR.

The protein belongs to the RNF8 family. As to quaternary structure, homodimer. Forms a E2-E3 ubiquitin ligase complex composed of the RNF8 homodimer and a E2 heterodimer of UBE2N and UBE2V2. Interacts with class III E2s, including UBE2E1, UBE2E2, and UBE2E3 and with UBE2N. Interacts with RXRA. Interacts (via FHA domain) with phosphorylated HERC2 (via C-terminus). Interacts with PIWIL1; leading to sequester RNF8 in the cytoplasm. Interacts with WRAP53/TCAB1. In terms of processing, autoubiquitinated through 'Lys-48' and 'Lys-63' of ubiquitin. 'Lys-63' polyubiquitination is mediated by UBE2N. 'Lys-29'-type polyubiquitination is also observed, but it doesn't require its own functional RING-type zinc finger.

It is found in the nucleus. The protein resides in the cytoplasm. Its subcellular location is the midbody. The protein localises to the chromosome. It localises to the telomere. It catalyses the reaction S-ubiquitinyl-[E2 ubiquitin-conjugating enzyme]-L-cysteine + [acceptor protein]-L-lysine = [E2 ubiquitin-conjugating enzyme]-L-cysteine + N(6)-ubiquitinyl-[acceptor protein]-L-lysine.. Its pathway is protein modification; protein ubiquitination. In terms of biological role, E3 ubiquitin-protein ligase that plays a key role in DNA damage signaling via 2 distinct roles: by mediating the 'Lys-63'-linked ubiquitination of histones H2A and H2AX and promoting the recruitment of DNA repair proteins at double-strand breaks (DSBs) sites, and by catalyzing 'Lys-48'-linked ubiquitination to remove target proteins from DNA damage sites. Following DNA DSBs, it is recruited to the sites of damage by ATM-phosphorylated MDC1 and catalyzes the 'Lys-63'-linked ubiquitination of histones H2A and H2AX, thereby promoting the formation of TP53BP1 and BRCA1 ionizing radiation-induced foci (IRIF). Also controls the recruitment of UIMC1-BRCC3 (RAP80-BRCC36) and PAXIP1/PTIP to DNA damage sites. Promotes the recruitment of NBN to DNA damage sites by catalyzing 'Lys-6'-linked ubiquitination of NBN. Also recruited at DNA interstrand cross-links (ICLs) sites and catalyzes 'Lys-63'-linked ubiquitination of histones H2A and H2AX, leading to recruitment of FAAP20 and Fanconi anemia (FA) complex, followed by interstrand cross-link repair. H2A ubiquitination also mediates the ATM-dependent transcriptional silencing at regions flanking DSBs in cis, a mechanism to avoid collision between transcription and repair intermediates. Promotes the formation of 'Lys-63'-linked polyubiquitin chains via interactions with the specific ubiquitin-conjugating UBE2N/UBC13 and ubiquitinates non-histone substrates such as PCNA. Substrates that are polyubiquitinated at 'Lys-63' are usually not targeted for degradation. Also catalyzes the formation of 'Lys-48'-linked polyubiquitin chains via interaction with the ubiquitin-conjugating UBE2L6/UBCH8, leading to degradation of substrate proteins such as CHEK2, JMJD2A/KDM4A and KU80/XRCC5: it is still unclear how the preference toward 'Lys-48'- versus 'Lys-63'-linked ubiquitination is regulated but it could be due to RNF8 ability to interact with specific E2 specific ligases. For instance, interaction with phosphorylated HERC2 promotes the association between RNF8 and UBE2N/UBC13 and favors the specific formation of 'Lys-63'-linked ubiquitin chains. Promotes non-homologous end joining (NHEJ) by promoting the 'Lys-48'-linked ubiquitination and degradation the of KU80/XRCC5. Following DNA damage, mediates the ubiquitination and degradation of JMJD2A/KDM4A in collaboration with RNF168, leading to unmask H4K20me2 mark and promote the recruitment of TP53BP1 at DNA damage sites. Following DNA damage, mediates the ubiquitination and degradation of POLD4/p12, a subunit of DNA polymerase delta. In the absence of POLD4, DNA polymerase delta complex exhibits higher proofreading activity. In addition to its function in damage signaling, also plays a role in higher-order chromatin structure by mediating extensive chromatin decondensation. Involved in the activation of ATM by promoting histone H2B ubiquitination, which indirectly triggers histone H4 'Lys-16' acetylation (H4K16ac), establishing a chromatin environment that promotes efficient activation of ATM kinase. Required in the testis, where it plays a role in the replacement of histones during spermatogenesis. At uncapped telomeres, promotes the joining of deprotected chromosome ends by inducing H2A ubiquitination and TP53BP1 recruitment, suggesting that it may enhance cancer development by aggravating telomere-induced genome instability in case of telomeric crisis. Promotes the assembly of RAD51 at DNA DSBs in the absence of BRCA1 and TP53BP1 Also involved in class switch recombination in immune system, via its role in regulation of DSBs repair. May be required for proper exit from mitosis after spindle checkpoint activation and may regulate cytokinesis. May play a role in the regulation of RXRA-mediated transcriptional activity. Not involved in RXRA ubiquitination by UBE2E2. This is E3 ubiquitin-protein ligase RNF8 from Bos taurus (Bovine).